We begin with the raw amino-acid sequence, 366 residues long: Polyprenyl transferase ausN (366 aa).

8 helical membrane passes run 97-117, 121-141, 164-184, 215-235, 239-259, 287-307, 308-328, and 346-366; these read VVGI…DLLL, LLLT…NDLI, LPTA…LFLF, LILV…GVEP, ILSS…IDLV, LAYS…LLGG, LRAP…WTFL, and SCLM…AVRV.

Belongs to the UbiA prenyltransferase family. Mg(2+) serves as cofactor.

The protein localises to the membrane. It carries out the reaction 3,5-dimethylorsellinate + (2E,6E)-farnesyl diphosphate = (3R)-3-farnesyl-6-hydroxy-2,3,5-trimethyl-4-oxocyclohexa-1,5-diene-1-carboxylate + diphosphate + H(+). It functions in the pathway secondary metabolite biosynthesis; terpenoid biosynthesis. Functionally, polyprenyl transferase; part of the gene cluster that mediates the biosynthesis of calidodehydroaustin, a fungal meroterpenoid. The first step of the pathway is the synthesis of 3,5-dimethylorsellinic acid by the polyketide synthase ausA. 3,5-dimethylorsellinic acid is then prenylated by the polyprenyl transferase ausN. Further epoxidation by the FAD-dependent monooxygenase ausM and cyclization by the probable terpene cyclase ausL lead to the formation of protoaustinoid A. Protoaustinoid A is then oxidized to spiro-lactone preaustinoid A3 by the combined action of the FAD-binding monooxygenases ausB and ausC, and the dioxygenase ausE. Acid-catalyzed keto-rearrangement and ring contraction of the tetraketide portion of preaustinoid A3 by ausJ lead to the formation of preaustinoid A4. The aldo-keto reductase ausK, with the help of ausH, is involved in the next step by transforming preaustinoid A4 into isoaustinone which is in turn hydroxylated by the P450 monooxygenase ausI to form austinolide. The cytochrome P450 monooxygenase ausG modifies austinolide to austinol. Austinol is further acetylated to austin by the O-acetyltransferase ausP, which spontaneously changes to dehydroaustin. The cytochrome P450 monooxygenase ausR then converts dehydroaustin is into 7-dehydrodehydroaustin. The hydroxylation catalyzed by ausR permits the O-acetyltransferase ausQ to add an additional acetyl group to the molecule, leading to the formation of acetoxydehydroaustin. The short chain dehydrogenase ausT catalyzes the reduction of the double bond present between carbon atoms 1 and 2 to convert 7-dehydrodehydroaustin into 1,2-dihydro-7-hydroxydehydroaustin. AusQ catalyzes not only an acetylation reaction but also the addition of the PKS ausV diketide product to 1,2-dihydro-7-hydroxydehydroaustin, forming precalidodehydroaustin. Finally, the iron/alpha-ketoglutarate-dependent dioxygenase converts precalidodehydroaustin into calidodehydroaustin. The chain is Polyprenyl transferase ausN from Aspergillus calidoustus.